The sequence spans 150 residues: 3-dehydroquinate dehydratase (150 aa).

The active-site Proton acceptor is Tyr26. Asn77, His83, and Asp90 together coordinate substrate. The active-site Proton donor is His103. Substrate contacts are provided by residues 104-105 (LS) and Arg114.

The protein belongs to the type-II 3-dehydroquinase family. Homododecamer.

It carries out the reaction 3-dehydroquinate = 3-dehydroshikimate + H2O. It functions in the pathway metabolic intermediate biosynthesis; chorismate biosynthesis; chorismate from D-erythrose 4-phosphate and phosphoenolpyruvate: step 3/7. Its function is as follows. Catalyzes a trans-dehydration via an enolate intermediate. The protein is 3-dehydroquinate dehydratase of Citrobacter koseri (strain ATCC BAA-895 / CDC 4225-83 / SGSC4696).